The chain runs to 252 residues: Neurotrophic factor BDNF precursor form (252 aa).

Positions 1-18 (MTILFLTMVISYFGCMKA) are cleaved as a signal peptide. The propeptide occupies 19–133 (APMKEANVRG…AANMSMRVRR (115 aa)). The disordered stretch occupies residues 43-62 (LESVNGPKAGSRGLTSSSSS). Asparagine 126 carries an N-linked (GlcNAc...) asparagine glycan. 3 disulfides stabilise this stretch: cysteine 146/cysteine 213, cysteine 191/cysteine 242, and cysteine 201/cysteine 244.

The protein belongs to the NGF-beta family. Monomers and homodimers. Binds to NTRK2/TRKB. Can form heterodimers with other neurotrophin family members, such as NTF3 and NTF4 (in vitro), but the physiological relevance of this is not clear. BDNF precursor form: interacts with the heterodimer formed by NGFR and SORCS2. Mature BDNF has much lower affinity for the heterodimer formed by NGFR and SORCS2. In terms of processing, N-glycosylated and glycosulfated, contrary to mature BDNF. Post-translationally, mature BDNF is produced by proteolytic removal of the propeptide, catalyzed by a FURIN family member. In addition, the precursor form is proteolytically cleaved within the propeptide, but this is not an obligatory intermediate for the production of mature BDNF. Can be converted into mature BDNF by plasmin (PLG). Brain and central nervous system.

The protein localises to the secreted. Functionally, important signaling molecule that activates signaling cascades downstream of NTRK2. During development, promotes the survival and differentiation of selected neuronal populations of the peripheral and central nervous systems. Participates in axonal growth, pathfinding and in the modulation of dendritic growth and morphology. Major regulator of synaptic transmission and plasticity at adult synapses in many regions of the CNS. The versatility of BDNF is emphasized by its contribution to a range of adaptive neuronal responses including long-term potentiation (LTP), long-term depression (LTD), certain forms of short-term synaptic plasticity, as well as homeostatic regulation of intrinsic neuronal excitability. In terms of biological role, important signaling molecule that activates signaling cascades downstream of NTRK2. Activates signaling cascades via the heterodimeric receptor formed by NGFR and SORCS2. Signaling via NGFR and SORCS2 plays a role in synaptic plasticity and long-term depression (LTD). Binding to NGFR and SORCS2 promotes neuronal apoptosis. Promotes neuronal growth cone collapse. The sequence is that of Neurotrophic factor BDNF precursor form (BDNF) from Sus scrofa (Pig).